Consider the following 372-residue polypeptide: Tetraacyldisaccharide 4'-kinase (372 aa).

Position 65–72 (T65–T72) interacts with ATP. Residues Q351–A372 form a disordered region. The span at G360–A372 shows a compositional bias: basic and acidic residues.

Belongs to the LpxK family.

It carries out the reaction a lipid A disaccharide + ATP = a lipid IVA + ADP + H(+). Its pathway is glycolipid biosynthesis; lipid IV(A) biosynthesis; lipid IV(A) from (3R)-3-hydroxytetradecanoyl-[acyl-carrier-protein] and UDP-N-acetyl-alpha-D-glucosamine: step 6/6. Transfers the gamma-phosphate of ATP to the 4'-position of a tetraacyldisaccharide 1-phosphate intermediate (termed DS-1-P) to form tetraacyldisaccharide 1,4'-bis-phosphate (lipid IVA). In Cupriavidus metallidurans (strain ATCC 43123 / DSM 2839 / NBRC 102507 / CH34) (Ralstonia metallidurans), this protein is Tetraacyldisaccharide 4'-kinase.